We begin with the raw amino-acid sequence, 444 residues long: MARTRNRLDRTPFQTAVTDLSHDGRGVARRDGEGGKVTFISGALPGELVRAEPTARSRHFDEAKTVGVLEASPQRVTPRCPHFGVCAGCVLQHLEESQQIVAKQRVLMDNLERIGHVTPQAVLPALTGDNWGYRRKGRFSVRRVEKKDKTLVGFRELDPRFVADLSVCYTVIPQIGEKIPLLAALIEGMDGKRDIPQIEFIAGDDAVALTIRHMQPLSERDRQAWITFAQEHGFAIFLQPGGVDSVQPLWPQEVPLSFRLPQWDVELAFRPLDFIQVNASLNQKMIAHAVALLEAKPDDRVLDLFCGLGNFTLPLARVVREVVGVEGDAGLVARAKENAQRNGLDNAQFYAADLTQDQRSAPWMRQGFDKLLLDPPRSGALEVLQQLPLKTFQRIVYVSCHPGSLARDAGYLVNEQGFTLVSAGAMDMFPHTAHVESIAVFERR.

The TRAM domain maps to 5-67 (RNRLDRTPFQ…RHFDEAKTVG (63 aa)). [4Fe-4S] cluster contacts are provided by C80, C86, C89, and C168. S-adenosyl-L-methionine is bound by residues Q276, F305, N310, E326, D353, and D374. The active-site Nucleophile is C400.

It belongs to the class I-like SAM-binding methyltransferase superfamily. RNA M5U methyltransferase family. RlmD subfamily.

The enzyme catalyses uridine(1939) in 23S rRNA + S-adenosyl-L-methionine = 5-methyluridine(1939) in 23S rRNA + S-adenosyl-L-homocysteine + H(+). Its function is as follows. Catalyzes the formation of 5-methyl-uridine at position 1939 (m5U1939) in 23S rRNA. The sequence is that of 23S rRNA (uracil(1939)-C(5))-methyltransferase RlmD from Xanthomonas axonopodis pv. citri (strain 306).